Here is a 442-residue protein sequence, read N- to C-terminus: MTRRPVSRKRRATHGTGPGEQSDWDHSAHKRKRLQPEKKSLVFYLKSRELKPHNDSTYLHLLRGHAACTLPGILSEREFHLGNLNKVFASQWLNHRQVVCGTKCNTLFVVDIQTGQITKIPILKDREPISGSHQSCGIHAIEINPSRTLLATGGENPNSIAVYRLPTLDPVCVGDGGHNDWIFSIAWISDTMAVSGSRDGFMALWEMTDEVVNKRDFQHGLSRVPVYSHISHKALKDIPKESSNPVNCKVRALAFNGNNKELGAVSLDGFFHLWKAEQTLSKLLSTKLPFCRENVCLAYGLEWSLYAVGSQAHVSFLDPREPPQCAKSVYCREQGSGIRSVSFYEHIVTVGTGQGALLFYDIRAQRFLEDLTGSCREGDLLKLNTGKGWLNHNEMWMNYFSDIDSCPNAVYTHCYDSSGTKLFVAGGPLPTGLHGNYAGLWS.

Over residues 1–13 the composition is skewed to basic residues; sequence MTRRPVSRKRRAT. A disordered region spans residues 1–31; sequence MTRRPVSRKRRATHGTGPGEQSDWDHSAHKR. WD repeat units follow at residues 132–173, 177–215, 245–284, and 333–370; these read SHQS…PVCV, GHND…VNKR, PVNC…SKLL, and EQGS…FLED.

It belongs to the WD repeat DCAF12 family. Component of the DCX(DCAF12) E3 ubiquitin ligase complex, at least composed of cul4 (cul4a or cul4b), ddb1, dcaf12 and rbx1.

It is found in the cytoplasm. It localises to the cytoskeleton. Its subcellular location is the microtubule organizing center. The protein resides in the centrosome. The protein localises to the nucleus. It functions in the pathway protein modification; protein ubiquitination. Functionally, substrate-recognition component of a DCX (DDB1-CUL4-X-box) E3 ubiquitin-protein ligase complex of the DesCEND (destruction via C-end degrons) pathway, which recognizes a C-degron located at the extreme C terminus of target proteins, leading to their ubiquitination and degradation. The C-degron recognized by the DesCEND pathway is usually a motif of less than ten residues and can be present in full-length proteins, truncated proteins or proteolytically cleaved forms. The DCX(DCAF12) complex specifically recognizes proteins with a diglutamate (Glu-Glu) at the C-terminus leading to their ubiquitination and degradation. Also directly recognizes the C-terminal glutamate-leucine (Glu-Leu) degron as an alternative degron in proteins leading to their ubiquitination and degradation. The chain is DDB1- and CUL4-associated factor 12-B (dcaf12-b) from Xenopus laevis (African clawed frog).